A 209-amino-acid chain; its full sequence is A-type ATP synthase subunit D (209 aa).

It belongs to the V-ATPase D subunit family. In terms of assembly, has multiple subunits with at least A(3), B(3), C, D, E, F, H, I and proteolipid K(x).

The protein resides in the cell membrane. Functionally, component of the A-type ATP synthase that produces ATP from ADP in the presence of a proton gradient across the membrane. The chain is A-type ATP synthase subunit D from Thermoplasma volcanium (strain ATCC 51530 / DSM 4299 / JCM 9571 / NBRC 15438 / GSS1).